A 312-amino-acid chain; its full sequence is DNA-directed RNA polymerase subunit alpha (312 aa).

An alpha N-terminal domain (alpha-NTD) region spans residues 1–229 (MLQYQIDRIE…ELFQPLATVT (229 aa)). The alpha C-terminal domain (alpha-CTD) stretch occupies residues 239–312 (EPSAEAQIPL…ISIPQSRTSA (74 aa)).

It belongs to the RNA polymerase alpha chain family. In cyanobacteria the RNAP catalytic core is composed of 2 alpha, 1 beta, 1 beta', 1 gamma and 1 omega subunit. When a sigma factor is associated with the core the holoenzyme is formed, which can initiate transcription.

It carries out the reaction RNA(n) + a ribonucleoside 5'-triphosphate = RNA(n+1) + diphosphate. Functionally, DNA-dependent RNA polymerase catalyzes the transcription of DNA into RNA using the four ribonucleoside triphosphates as substrates. In Synechococcus sp. (strain CC9605), this protein is DNA-directed RNA polymerase subunit alpha.